We begin with the raw amino-acid sequence, 190 residues long: Potassium-transporting ATPase KdpC subunit (190 aa).

The chain crosses the membrane as a helical span at residues 10–30 (TFLFLLLITGGVYPLLTTALG).

It belongs to the KdpC family. The system is composed of three essential subunits: KdpA, KdpB and KdpC.

It is found in the cell inner membrane. Functionally, part of the high-affinity ATP-driven potassium transport (or Kdp) system, which catalyzes the hydrolysis of ATP coupled with the electrogenic transport of potassium into the cytoplasm. This subunit acts as a catalytic chaperone that increases the ATP-binding affinity of the ATP-hydrolyzing subunit KdpB by the formation of a transient KdpB/KdpC/ATP ternary complex. The protein is Potassium-transporting ATPase KdpC subunit of Escherichia coli O6:H1 (strain CFT073 / ATCC 700928 / UPEC).